Consider the following 235-residue polypeptide: Orotidine 5'-phosphate decarboxylase (235 aa).

Substrate contacts are provided by residues aspartate 16, lysine 38, 65–74, threonine 120, arginine 181, glutamine 190, glycine 210, and arginine 211; that span reads DLKLHDIGNT. The active-site Proton donor is lysine 67.

Belongs to the OMP decarboxylase family. Type 1 subfamily. As to quaternary structure, homodimer.

The enzyme catalyses orotidine 5'-phosphate + H(+) = UMP + CO2. The protein operates within pyrimidine metabolism; UMP biosynthesis via de novo pathway; UMP from orotate: step 2/2. In terms of biological role, catalyzes the decarboxylation of orotidine 5'-monophosphate (OMP) to uridine 5'-monophosphate (UMP). The chain is Orotidine 5'-phosphate decarboxylase from Rhodopseudomonas palustris (strain BisA53).